The sequence spans 903 residues: Valine--tRNA ligase (903 aa).

The segment covering 1–15 (MVCVTDQNNENPSQN) has biased composition (polar residues). The segment at 1–22 (MVCVTDQNNENPSQNRADKLPK) is disordered. Positions 61–71 (PNVTGQLHMGH) match the 'HIGH' region motif. The short motif at 552–556 (KMSKS) is the 'KMSKS' region element. Residue Lys555 coordinates ATP. Residues 836–902 (TVDVAAERKR…ERITKRLEEL (67 aa)) adopt a coiled-coil conformation.

The protein belongs to the class-I aminoacyl-tRNA synthetase family. ValS type 1 subfamily. In terms of assembly, monomer.

It is found in the cytoplasm. It carries out the reaction tRNA(Val) + L-valine + ATP = L-valyl-tRNA(Val) + AMP + diphosphate. Catalyzes the attachment of valine to tRNA(Val). As ValRS can inadvertently accommodate and process structurally similar amino acids such as threonine, to avoid such errors, it has a 'posttransfer' editing activity that hydrolyzes mischarged Thr-tRNA(Val) in a tRNA-dependent manner. The protein is Valine--tRNA ligase of Corynebacterium efficiens (strain DSM 44549 / YS-314 / AJ 12310 / JCM 11189 / NBRC 100395).